Here is a 186-residue protein sequence, read N- to C-terminus: Protein GrpE (186 aa).

The span at 1–17 shows a compositional bias: basic and acidic residues; it reads MKDEHNQEHDLSQKELE. The disordered stretch occupies residues 1–32; it reads MKDEHNQEHDLSQKELESCENSCTCEGKKQEA.

It belongs to the GrpE family. In terms of assembly, homodimer.

Its subcellular location is the cytoplasm. Functionally, participates actively in the response to hyperosmotic and heat shock by preventing the aggregation of stress-denatured proteins, in association with DnaK and GrpE. It is the nucleotide exchange factor for DnaK and may function as a thermosensor. Unfolded proteins bind initially to DnaJ; upon interaction with the DnaJ-bound protein, DnaK hydrolyzes its bound ATP, resulting in the formation of a stable complex. GrpE releases ADP from DnaK; ATP binding to DnaK triggers the release of the substrate protein, thus completing the reaction cycle. Several rounds of ATP-dependent interactions between DnaJ, DnaK and GrpE are required for fully efficient folding. The polypeptide is Protein GrpE (Helicobacter acinonychis (strain Sheeba)).